Reading from the N-terminus, the 233-residue chain is Purine nucleoside phosphorylase DeoD-type (233 aa).

Histidine 4 is an a purine D-ribonucleoside binding site. Residues glycine 20, arginine 24, arginine 43, and 87 to 90 contribute to the phosphate site; that span reads RIGT. A purine D-ribonucleoside is bound by residues 179–181 and 203–204; these read EME and SD. Aspartate 204 acts as the Proton donor in catalysis.

The protein belongs to the PNP/UDP phosphorylase family. In terms of assembly, homohexamer; trimer of homodimers.

It catalyses the reaction a purine D-ribonucleoside + phosphate = a purine nucleobase + alpha-D-ribose 1-phosphate. It carries out the reaction a purine 2'-deoxy-D-ribonucleoside + phosphate = a purine nucleobase + 2-deoxy-alpha-D-ribose 1-phosphate. In terms of biological role, catalyzes the reversible phosphorolytic breakdown of the N-glycosidic bond in the beta-(deoxy)ribonucleoside molecules, with the formation of the corresponding free purine bases and pentose-1-phosphate. This Helicobacter pylori (strain G27) protein is Purine nucleoside phosphorylase DeoD-type.